The sequence spans 388 residues: MRYLTSGESHGPQLTVIVEGVPANLEVKVEDINKEMFKRQGGYGRGRRMQIEKDTVEIVSGVRNGYTLGSPITMVVTNDDFTHWRKIMGRAPISDEERENMKRTITKPRPGHADLLGGMKYNHRDLRNVLERSSARETAARVAVGALCKVLLEQLDIEIYSRVVEIGGIKDKDFYDSETFKANLDRNDVRVIDDGIAQAMRDKIDEAKTDGDSIGGVVQVVVENMPVGVGSYVHYDRKLDGRIAQGVVSINAFKGVSFGEGFKAAEKPGSEIQDEILYNTELGYYRGSNHLGGLEGGMSNGMPIIVNGVMKPIPTLYKPLNSVDINTKEDFKATIERSDSCAVPAASIVCEHVVAFAIAKALLEEFQSNHIEQLKQQIIERRQLNIEF.

Arginine 39 and arginine 45 together coordinate NADP(+). Residues 132–134 (RSS), 251–252 (NA), glycine 296, 311–315 (KPIPT), and arginine 337 contribute to the FMN site.

In terms of assembly, homotetramer. FMNH2 serves as cofactor.

It catalyses the reaction 5-O-(1-carboxyvinyl)-3-phosphoshikimate = chorismate + phosphate. The protein operates within metabolic intermediate biosynthesis; chorismate biosynthesis; chorismate from D-erythrose 4-phosphate and phosphoenolpyruvate: step 7/7. Catalyzes the anti-1,4-elimination of the C-3 phosphate and the C-6 proR hydrogen from 5-enolpyruvylshikimate-3-phosphate (EPSP) to yield chorismate, which is the branch point compound that serves as the starting substrate for the three terminal pathways of aromatic amino acid biosynthesis. This reaction introduces a second double bond into the aromatic ring system. This Staphylococcus aureus protein is Chorismate synthase.